The following is a 193-amino-acid chain: Recombination protein RecR (193 aa).

The C4-type zinc finger occupies 61–76; sequence CSSCNALSESEVCEIC. The 87-residue stretch at 84-170 folds into the Toprim domain; sequence SQLCMVLHPR…TFTKIAQGVP (87 aa).

The protein belongs to the RecR family.

Its function is as follows. May play a role in DNA repair. It seems to be involved in an RecBC-independent recombinational process of DNA repair. It may act with RecF and RecO. The sequence is that of Recombination protein RecR from Helicobacter pylori (strain G27).